Reading from the N-terminus, the 236-residue chain is Small ribosomal subunit protein uS2c (236 aa).

This sequence belongs to the universal ribosomal protein uS2 family.

The protein localises to the plastid. The chain is Small ribosomal subunit protein uS2c (rps2) from Cuscuta exaltata (Tall dodder).